The following is a 737-amino-acid chain: O-GlcNAcase BT_4395 (737 aa).

An N-terminal signal peptide occupies residues 1-21 (MKNNKIYLLGACLLCAVTTFA). Residues 148-433 (VRYRGVVEGF…WKDAIRTILP (286 aa)) are catalytic domain. The GH84 domain maps to 149 to 416 (RYRGVVEGFY…SVASYAWNPA (268 aa)). The a protein site is built by Gly-156, Lys-187, and Asp-263. Asp-264 functions as the Proton donor in the catalytic mechanism. Residues Tyr-303, 358-360 (WWN), Asp-365, and Asn-393 contribute to the a protein site.

This sequence belongs to the glycosyl hydrolase 84 family. As to quaternary structure, homodimer.

The enzyme catalyses 3-O-(N-acetyl-beta-D-glucosaminyl)-L-seryl-[protein] + H2O = N-acetyl-D-glucosamine + L-seryl-[protein]. The catalysed reaction is 3-O-(N-acetyl-beta-D-glucosaminyl)-L-threonyl-[protein] + H2O = L-threonyl-[protein] + N-acetyl-D-glucosamine. Its activity is regulated as follows. Inhibited by 1,2-dideoxy-2'-methyl-alpha-D-glucopyranoso-[2,1-d]-delta 2'-thiazoline (NAG-thiazoline) and O-(2-acetamido-2-deoxy-D-glucopyranosylidene)amino-N-phenyl-carbamate (PUGNAc). Not inhibited by Streptozotocin. Functionally, can hydrolyze the glycosidic link of O-GlcNAcylated proteins. Can use p-nitrophenyl-beta-GlcNAc and 4-methylumbelliferone-GlcNAc as substrates (in vitro). In Bacteroides thetaiotaomicron (strain ATCC 29148 / DSM 2079 / JCM 5827 / CCUG 10774 / NCTC 10582 / VPI-5482 / E50), this protein is O-GlcNAcase BT_4395.